Reading from the N-terminus, the 440-residue chain is Adenosylhomocysteinase (440 aa).

Positions 47, 123, and 148 each coordinate substrate. 149-151 lines the NAD(+) pocket; that stretch reads TTT. 2 residues coordinate substrate: Lys178 and Asp182. Residues Asn183, 228-233, Glu251, 307-309, and Asn354 each bind NAD(+); these read GFGDVG and IGH.

Belongs to the adenosylhomocysteinase family. It depends on NAD(+) as a cofactor.

It carries out the reaction S-adenosyl-L-homocysteine + H2O = L-homocysteine + adenosine. It functions in the pathway amino-acid biosynthesis; L-homocysteine biosynthesis; L-homocysteine from S-adenosyl-L-homocysteine: step 1/1. Its function is as follows. Adenosylhomocysteine is a competitive inhibitor of S-adenosyl-L-methionine-dependent methyl transferase reactions; therefore adenosylhomocysteinase may play a key role in the control of methylations via regulation of the intracellular concentration of adenosylhomocysteine. This Pneumocystis carinii protein is Adenosylhomocysteinase (SAHH).